A 32-amino-acid polypeptide reads, in one-letter code: Small ribosomal subunit protein uS19 (32 aa).

Belongs to the universal ribosomal protein uS19 family.

Functionally, protein S19 forms a complex with S13 that binds strongly to the 16S ribosomal RNA. The chain is Small ribosomal subunit protein uS19 (rpsS) from Yersinia enterocolitica.